Consider the following 257-residue polypeptide: G2/mitotic-specific cyclin S13-7 (257 aa).

It belongs to the cyclin family. Cyclin AB subfamily. As to quaternary structure, interacts with the CDC2 protein kinase to form a serine/threonine kinase holoenzyme complex also known as maturation promoting factor (MPF). The cyclin subunit imparts substrate specificity to the complex.

Functionally, essential for the control of the cell cycle at the G2/M (mitosis) transition. This chain is G2/mitotic-specific cyclin S13-7, found in Glycine max (Soybean).